A 134-amino-acid chain; its full sequence is Profilin-1 (134 aa).

It belongs to the profilin family. As to quaternary structure, occurs in many kinds of cells as a complex with monomeric actin in a 1:1 ratio.

It is found in the cytoplasm. The protein resides in the cytoskeleton. In terms of biological role, binds to actin and affects the structure of the cytoskeleton. At high concentrations, profilin prevents the polymerization of actin, whereas it enhances it at low concentrations. By binding to PIP2, it inhibits the formation of IP3 and DG. The polypeptide is Profilin-1 (PRO1) (Nicotiana tabacum (Common tobacco)).